Here is a 425-residue protein sequence, read N- to C-terminus: Probable mitochondrial import inner membrane translocase subunit tin-44 (425 aa).

Positions 38–149 (FLNNLIDNVR…EHVEKVAEKV (112 aa)) form a coiled coil.

Belongs to the Tim44 family. Probable component of the PAM complex at least composed of a mitochondrial HSP70 protein, GrpE, tin-44, tim-16 and tim-14/dnj-21. The complex interacts with the tim-23 component of the TIM23 complex.

It localises to the mitochondrion inner membrane. Essential component of the PAM complex, a complex required for the translocation of transit peptide-containing proteins from the inner membrane into the mitochondrial matrix in an ATP-dependent manner. Recruits mitochondrial HSP70 to drive protein translocation into the matrix using ATP as an energy source. The sequence is that of Probable mitochondrial import inner membrane translocase subunit tin-44 from Caenorhabditis elegans.